The following is a 1170-amino-acid chain: Thrombospondin-1 (1170 aa).

Positions Met-1–Ser-18 are cleaved as a signal peptide. Positions Arg-47–Arg-95 are heparin-binding. The 206-residue stretch at Asn-65–Cys-270 folds into the Laminin G-like domain. Residues Cys-171 and Cys-232 are joined by a disulfide bond. Residues Asn-248 and Asn-360 are each glycosylated (N-linked (GlcNAc...) asparagine). Positions Pro-316–Trp-373 constitute a VWFC domain. TSP type-1 domains follow at residues Asp-379–Asp-429, Asp-435–Pro-490, and Asn-492–Pro-547. 27 disulfides stabilise this stretch: Cys-391/Cys-423, Cys-395/Cys-428, Cys-406/Cys-413, Cys-447/Cys-484, Cys-451/Cys-489, Cys-462/Cys-474, Cys-504/Cys-541, Cys-508/Cys-546, Cys-519/Cys-531, Cys-551/Cys-562, Cys-556/Cys-572, Cys-575/Cys-586, Cys-592/Cys-608, Cys-599/Cys-617, Cys-620/Cys-644, Cys-650/Cys-663, Cys-657/Cys-676, Cys-678/Cys-689, Cys-705/Cys-713, Cys-718/Cys-738, Cys-754/Cys-774, Cys-777/Cys-797, Cys-813/Cys-833, Cys-836/Cys-856, Cys-874/Cys-894, Cys-910/Cys-930, and Cys-946/Cys-1167. Residues Pro-547–Lys-587 form the EGF-like 1 domain. Ser-553 carries O-linked (Xyl) serine glycosylation. The EGF-like 2 domain occupies Pro-646–Gly-690. TSP type-3 repeat units lie at residues Glu-691–Gln-726, Glu-727–Gln-762, Tyr-763–Gln-785, Ala-786–Gln-821, Lys-822–Gln-844, Leu-845–Gln-882, Ala-883–Gln-918, and Lys-919–Glu-954. A glycan (N-linked (GlcNAc...) asparagine) is linked at Asn-708. A disordered region spans residues Glu-839 to Asp-944. Basic and acidic residues-rich tracts occupy residues His-840–Asp-854, Ala-883–Cys-894, and Asp-917–Asp-941. The Cell attachment site signature appears at Arg-926–Asp-928. The region spanning Arg-958–Ser-1170 is the TSP C-terminal domain. Asn-1067 and Asn-1085 each carry an N-linked (GlcNAc...) asparagine glycan.

The protein belongs to the thrombospondin family. Homotrimer; disulfide-linked. Can bind to fibrinogen, fibronectin, laminin, type V collagen and integrins alpha-V/beta-1, alpha-V/beta-3 and alpha-IIb/beta-3. Binds heparin. Interacts (via the C-terminal domain) with CD47. Interacts (via the TSP type I repeats) with CD36; the interaction conveys an antiangiogenic effect. Interacts (via the TSP type I repeats) with HRG; the interaction blocks the antiangiogenic effect of THBS1 with CD36. Interacts with ATF6 (via lumenal domain). Interacts with FN1; this interaction is enhanced by TNFAIP6, which may act as a bridging molecule between FN1 and THBS1. Interacts with SIRPA; the interaction stimulates phosphorylation of SIRPA. As to expression, odontoblasts.

The protein localises to the secreted. The protein resides in the cell surface. It localises to the extracellular space. It is found in the extracellular matrix. Its subcellular location is the endoplasmic reticulum. The protein localises to the sarcoplasmic reticulum. In terms of biological role, adhesive glycoprotein that mediates cell-to-cell and cell-to-matrix interactions. Multifunctional, involved in inflammation, angiogenesis, wound healing, reactive oxygen species (ROS) signaling, nitrous oxide (NO) signaling, apoptosis, senescence, aging, cellular self-renewal, stemness, and cardiovascular and metabolic homeostasis. Negatively modulates dendritic cell activation and cytokine release, as part of an autocrine feedback loop, contributing to the resolution of inflammation and immune homeostasis. Ligand for receptor CD47. Modulates nitrous oxide (NO) signaling via CD47, hence playing a role as a pressor agent, supporting blood pressure. Plays a role in endothelial cell senescence, acting via CD47, by increasing the abundance and activation of NADPH oxidase NOX1, and so generating excess ROS. Inhibits stem cell self-renewal, acting via CD47 signaling, probably by regulation of the stem cell transcription factors POU5F1/OCT4, SOX2, MYC/c-Myc and KLF4. Negatively modulates wound healing, acting via CD47. Ligand for receptor CD36. Involved in inducing apoptosis in podocytes in response to elevated free fatty acids, acting via CD36. Plays a role in suppressing angiogenesis, acting, depending on context, via CD36 or CD47. Promotes cellular senescence in a TP53-CDKN1A-RB1 signaling-dependent manner. Ligand for immunoglobulin-like cell surface receptor SIRPA. Involved in ROS signaling in non-phagocytic cells, stimulating NADPH oxidase-derived ROS production, acting via interaction with SIRPA. Plays a role in metabolic dysfunction in diet-induced obesity, perhaps acting by exacerbating adipose inflammatory activity; its effects may be mediated, at least in part, through enhanced adipocyte proliferation. Plays a role in ER stress response, via its interaction with the activating transcription factor 6 alpha (ATF6) which produces adaptive ER stress response factors. May be involved in age-related conditions, including metabolic dysregulation, during normal aging. The protein is Thrombospondin-1 (THBS1) of Bos taurus (Bovine).